An 80-amino-acid polypeptide reads, in one-letter code: RNA-binding protein Hfq (80 aa).

The Sm domain maps to 10–69; it reads DPFLNVLRKEHIPVSIYLVNGIKLQGHIDSFDQYVVLLRNSVTQMVYKHAISTIVPGKAV.

Belongs to the Hfq family. In terms of assembly, homohexamer.

RNA chaperone that binds small regulatory RNA (sRNAs) and mRNAs to facilitate mRNA translational regulation in response to envelope stress, environmental stress and changes in metabolite concentrations. Also binds with high specificity to tRNAs. The sequence is that of RNA-binding protein Hfq from Nitrosomonas eutropha (strain DSM 101675 / C91 / Nm57).